The following is a 374-amino-acid chain: Queuine tRNA-ribosyltransferase (374 aa).

Aspartate 89 acts as the Proton acceptor in catalysis. Substrate contacts are provided by residues 89 to 93, aspartate 143, glutamine 187, and glycine 214; that span reads DSGGF. The tract at residues 245 to 251 is RNA binding; it reads GVGKPED. Aspartate 264 serves as the catalytic Nucleophile. Residues 269 to 273 form an RNA binding; important for wobble base 34 recognition region; the sequence is TRNAR. Zn(2+) is bound by residues cysteine 302, cysteine 304, cysteine 307, and histidine 333.

Belongs to the queuine tRNA-ribosyltransferase family. As to quaternary structure, homodimer. Within each dimer, one monomer is responsible for RNA recognition and catalysis, while the other monomer binds to the replacement base PreQ1. Requires Zn(2+) as cofactor.

It carries out the reaction 7-aminomethyl-7-carbaguanine + guanosine(34) in tRNA = 7-aminomethyl-7-carbaguanosine(34) in tRNA + guanine. It functions in the pathway tRNA modification; tRNA-queuosine biosynthesis. In terms of biological role, catalyzes the base-exchange of a guanine (G) residue with the queuine precursor 7-aminomethyl-7-deazaguanine (PreQ1) at position 34 (anticodon wobble position) in tRNAs with GU(N) anticodons (tRNA-Asp, -Asn, -His and -Tyr). Catalysis occurs through a double-displacement mechanism. The nucleophile active site attacks the C1' of nucleotide 34 to detach the guanine base from the RNA, forming a covalent enzyme-RNA intermediate. The proton acceptor active site deprotonates the incoming PreQ1, allowing a nucleophilic attack on the C1' of the ribose to form the product. After dissociation, two additional enzymatic reactions on the tRNA convert PreQ1 to queuine (Q), resulting in the hypermodified nucleoside queuosine (7-(((4,5-cis-dihydroxy-2-cyclopenten-1-yl)amino)methyl)-7-deazaguanosine). In Shewanella baltica (strain OS223), this protein is Queuine tRNA-ribosyltransferase.